Reading from the N-terminus, the 525-residue chain is M-phase inducer phosphatase 1 (525 aa).

The disordered stretch occupies residues 1–42 (MELGPEPPHRRRLLFTCSPTPAPQPTGKVQFGASRAGGLSPV). The short motif at 74 to 84 (MGSSESTDSGF) is the Phosphodegron element. Residue Ser76 is modified to Phosphoserine; by CHEK1. 3 positions are modified to phosphoserine; by NEK11: Ser79, Ser82, and Ser88. Ser124 is subject to Phosphoserine; by CHEK1 and CHEK2. The KEN box motif lies at 141 to 143 (KEN). Ser178 is modified (phosphoserine; by CHEK1). The disordered stretch occupies residues 260–318 (FDSPSPCSSTSSCSTRAVKRADRSHEESPRGTKRRKSSEASPVKADVPEPTQLPHQSLS). A compositionally biased stretch (low complexity) spans 262 to 274 (SPSPCSSTSSCST). A compositionally biased stretch (basic and acidic residues) spans 278–289 (KRADRSHEESPR). Phosphoserine; by CHEK1 and CHEK2 occurs at positions 283 and 296. A Rhodanese domain is found at 377–483 (LIKEFVIIDC…FFLKCQSHCE (107 aa)). Cys432 is an active-site residue. Thr508 is subject to Phosphothreonine; by CHEK1. 2 positions are modified to phosphoserine; by PLK3: Ser514 and Ser520.

It belongs to the MPI phosphatase family. In terms of assembly, interacts with CCNB1/cyclin B1. Interacts with YWHAE/14-3-3 epsilon when phosphorylated. Interacts with CUL1 specifically when CUL1 is neddylated and active. Interacts with BTRC/BTRCP1 and FBXW11/BTRCP2. Interactions with CUL1, BTRC and FBXW11 are enhanced upon DNA damage. Interacts with CHEK2; mediates CDC25A phosphorylation and degradation in response to infrared-induced DNA damages. Interacts with HSP90AB1; prevents heat shock-mediated CDC25A degradation and contributes to cell cycle progression. In terms of processing, phosphorylated by CHEK1 on Ser-76, Ser-124, Ser-178, Ser-283, Ser-296 and Thr-508 during checkpoint mediated cell cycle arrest. Also phosphorylated by CHEK2 on Ser-124, Ser-283, and Ser-296 during checkpoint mediated cell cycle arrest. Phosphorylation on Ser-178 and Thr-508 creates binding sites for YWHAE/14-3-3 epsilon which inhibits CDC25A. Phosphorylation on Ser-76, Ser-124, Ser-178, Ser-283 and Ser-296 may also promote ubiquitin-dependent proteolysis of CDC25A by the SCF complex. Phosphorylation of CDC25A at Ser-76 by CHEK1 primes it for subsequent phosphorylation at Ser-79, Ser-82 and Ser-88 by NEK11. Phosphorylation by NEK11 is required for BTRC-mediated polyubiquitination and degradation. Phosphorylation by PIM1 leads to an increase in phosphatase activity. Phosphorylated by PLK3 following DNA damage, leading to promote its ubiquitination and degradation. Ubiquitinated by the anaphase promoting complex/cyclosome (APC/C) ubiquitin ligase complex that contains FZR1/CDH1 during G1 phase leading to its degradation by the proteasome. Ubiquitinated by a SCF complex containing BTRC and FBXW11 during S phase leading to its degradation by the proteasome. Deubiquitination by USP17L2/DUB3 leads to its stabilization.

It catalyses the reaction O-phospho-L-tyrosyl-[protein] + H2O = L-tyrosyl-[protein] + phosphate. Stimulated by B-type cyclins. Stimulated by PIM1-mediated phosphorylation. Tyrosine protein phosphatase which functions as a dosage-dependent inducer of mitotic progression. Directly dephosphorylates CDK1 and stimulates its kinase activity. Also dephosphorylates CDK2 in complex with cyclin-E, in vitro. The polypeptide is M-phase inducer phosphatase 1 (Cdc25a) (Rattus norvegicus (Rat)).